The chain runs to 306 residues: Non-specific ribonucleoside hydrolase RihC (306 aa).

His235 is a catalytic residue.

This sequence belongs to the IUNH family. RihC subfamily.

In terms of biological role, hydrolyzes both purine and pyrimidine ribonucleosides with a broad-substrate specificity. This is Non-specific ribonucleoside hydrolase RihC from Salmonella dublin (strain CT_02021853).